A 538-amino-acid polypeptide reads, in one-letter code: Phosphoenolpyruvate carboxykinase (ATP) (538 aa).

Positions 64, 205, and 211 each coordinate substrate. Residues K211, H230, and 246–254 (GLSGTGKTT) contribute to the ATP site. Mn(2+) is bound by residues K211 and H230. Residue D267 coordinates Mn(2+). Residues E295, R331, 447–448 (RI), and T453 each bind ATP. Substrate is bound at residue R331.

This sequence belongs to the phosphoenolpyruvate carboxykinase (ATP) family. In terms of assembly, monomer. Mn(2+) serves as cofactor.

Its subcellular location is the cytoplasm. It catalyses the reaction oxaloacetate + ATP = phosphoenolpyruvate + ADP + CO2. It functions in the pathway carbohydrate biosynthesis; gluconeogenesis. Involved in the gluconeogenesis. Catalyzes the conversion of oxaloacetate (OAA) to phosphoenolpyruvate (PEP) through direct phosphoryl transfer between the nucleoside triphosphate and OAA. The protein is Phosphoenolpyruvate carboxykinase (ATP) of Haemophilus influenzae (strain PittGG).